Here is a 50-residue protein sequence, read N- to C-terminus: Insulin (50 aa).

Cystine bridges form between C7–C36, C19–C49, and C35–C40.

Belongs to the insulin family. As to quaternary structure, heterodimer of a B chain and an A chain linked by two disulfide bonds.

It is found in the secreted. Insulin decreases blood glucose concentration. It increases cell permeability to monosaccharides, amino acids and fatty acids. It accelerates glycolysis, the pentose phosphate cycle, and glycogen synthesis in liver. The chain is Insulin (ins) from Katsuwonus pelamis (Skipjack tuna).